The following is a 642-amino-acid chain: Terminase, large subunit (642 aa).

Positions 1–48 (MISDAQKAANAAGAIATGLLSLIIPVPLTTVQWANKHYYLPKESSYTP) are interaction with the terminase small subunit. A Q motif motif is present at residues 42–51 (KESSYTPGRW). Residues 76-83 (KSARVGYT) carry the Walker A motif motif. Positions 166 to 353 (NYREKSVDVV…LDALKDPNGL (188 aa)) are DNA packaging/ATPase. The Walker B motif motif lies at 174 to 179 (VVCYDE). E179 acts as the For ATPase activity in catalysis. Residue D401 coordinates Mg(2+). The segment at 401 to 587 (DSQRNRFEMY…LWDNKKRRNE (187 aa)) is endonuclease. An ATP-binding site is contributed by 491–498 (GASVYGKP). A basic region spans residues 574–585 (KMRLLWDNKKRR). The segment at 589 to 617 (LDCLVYAYAALRVSVQRWQLDLAVLAKSR) is leucine zipper. A prohead binding region spans residues 611–642 (AVLAKSREEETTRPTLKELAAKLSGGVNGYSR).

This sequence belongs to the lambdavirus large terminase family. In terms of assembly, heterotrimer of two small and one large terminase subunits. The catalytically competent terminase is composed of a tetramer of heterotrimers. The tetramer forms a ring structure large enough to encircle duplex DNA. Host IHFA/IHFB induces bending of viral DNA to facilitate the assembly of the terminase tetramer of heterotrimers. Interacts (via N-terminus) with the terminase small subunit (via C-terminus). Interacts (via C-terminus) with the portal protein; this interaction allows the packaging of viral DNA. Mg(2+) is required as a cofactor.

The protein resides in the host cytoplasm. The catalysed reaction is Endonucleolytic cleavage of DNA to give specific double-stranded fragments with terminal 5'-phosphates.. Functionally, the terminase large subunit acts as an ATP driven molecular motor necessary for viral DNA translocation into empty capsids and as an endonuclease that cuts the viral genome from the concetamer to initiate and to end the packaging reaction. The terminase lies at a unique vertex of the procapsid and is composed of two subunits, a small terminase subunit involved in viral DNA recognition (binding to packaging sequence cos), and a large terminase subunit possessing endonucleolytic and ATPase activities (DNA maturation and packaging). The terminase binds cooperatively with the host factor IHFA/IHFB to the cos site at the junction of adjacent viral genomes. The endonuclease activity cleaves the viral DNA generating 5'overhangs of 12 bp in length. The strand separation activity separates the cohesive ends generating the single-stranded 'sticky' ends of the mature genome. IHFA/IHFB is also necessary for the strand separation activity of the terminase. The terminase remains bound to the left end of the genome to be packaged, forming a stable DNA-terminase complex. In a reaction facilitated by the viral assembly catalyst gpFI, the DNA-terminase complex binds to the portal of the procapsid thereby activating the translocase activity of the terminase. The terminase packages the viral DNA into the procapsid until the next cos site on the concatemer reaches the complex. The downstream cos site is then cut generating the mature right end of the genome, the heterotrimer undocks from the DNA-filled head and remains bound to the left end of concatemer's next genome. The protein is Terminase, large subunit (2) of Escherichia coli (Bacteriophage 21).